Here is a 25-residue protein sequence, read N- to C-terminus: Neuromedin-U-25 (25 aa).

An Asparagine amide modification is found at Asn25.

It belongs to the NmU family.

It localises to the secreted. Functionally, stimulates uterine smooth muscle contraction and causes selective vasoconstriction. In Sus scrofa (Pig), this protein is Neuromedin-U-25 (NMU).